Reading from the N-terminus, the 352-residue chain is Rhodopsin (352 aa).

Residues 1 to 36 (MNGTEGPFFYIPMVNTTGVVRSPYEYPQYYLVNPAA) lie on the Extracellular side of the membrane. Residues asparagine 2 and asparagine 15 are each glycosylated (N-linked (GlcNAc...) asparagine). Residues 37-61 (YACLGAYMFFLILVGFPVNFLTLYV) form a helical membrane-spanning segment. Topologically, residues 62-73 (TLEHKKLRTPLN) are cytoplasmic. A helical transmembrane segment spans residues 74-96 (YILLNLAVADLFMVFGGFTTTIY). Residues 97–110 (TSMHGYFVLGRLGC) lie on the Extracellular side of the membrane. Cysteine 110 and cysteine 187 are joined by a disulfide. Residues 111–133 (NIEGFFATLGGEIALWSLVVLAI) form a helical membrane-spanning segment. A 'Ionic lock' involved in activated form stabilization motif is present at residues 134–136 (ERW). The Cytoplasmic segment spans residues 134–152 (ERWVVVCKPISNFRFGENH). The chain crosses the membrane as a helical span at residues 153–173 (AIMGVAFTWFMASACAVPPLV). The Extracellular segment spans residues 174-202 (GWSRYIPEGMQCSCGIDYYTRAEGFNNES). Asparagine 200 carries N-linked (GlcNAc...) asparagine glycosylation. Residues 203-224 (FVIYMFTVHFCIPLAVVGFCYG) traverse the membrane as a helical segment. The Cytoplasmic portion of the chain corresponds to 225–252 (RLLCAVKEAAAAQQESETTQRAEREVSR). Residues 253–274 (MVVIMVIGFLVCWLPYASVAWY) form a helical membrane-spanning segment. The Extracellular portion of the chain corresponds to 275–286 (IFTHQGSEFGPL). The helical transmembrane segment at 287–308 (FMTIPAFFAKSSSIYNPMIYIC) threads the bilayer. Lysine 296 is modified (N6-(retinylidene)lysine). Residues 309-352 (MNKQFRHCMITTLCCGKNPFEEEEGASTTKTEASSVSSSSVSPA) lie on the Cytoplasmic side of the membrane. S-palmitoyl cysteine attachment occurs at residues cysteine 322 and cysteine 323. The tract at residues 331–352 (EEGASTTKTEASSVSSSSVSPA) is disordered. The segment covering 342–352 (SSVSSSSVSPA) has biased composition (low complexity).

This sequence belongs to the G-protein coupled receptor 1 family. Opsin subfamily. Post-translationally, phosphorylated on some or all of the serine and threonine residues present in the C-terminal region. Contains one covalently linked retinal chromophore.

The protein localises to the membrane. It localises to the cell projection. It is found in the cilium. Its subcellular location is the photoreceptor outer segment. Its function is as follows. Photoreceptor required for image-forming vision at low light intensity. While most salt water fish species use retinal as chromophore, most freshwater fish use 3-dehydroretinal, or a mixture of retinal and 3-dehydroretinal. Light-induced isomerization of 11-cis to all-trans retinal triggers a conformational change that activates signaling via G-proteins. Subsequent receptor phosphorylation mediates displacement of the bound G-protein alpha subunit by arrestin and terminates signaling. In Gobius niger (Black goby), this protein is Rhodopsin (rho).